The primary structure comprises 236 residues: 5'-methylthioadenosine/S-adenosylhomocysteine nucleosidase (236 aa).

Glutamate 12 acts as the Proton acceptor in catalysis. Residues glycine 78, isoleucine 153, and 174-175 contribute to the substrate site; that span reads ME. Aspartate 198 functions as the Proton donor in the catalytic mechanism.

This sequence belongs to the PNP/UDP phosphorylase family. MtnN subfamily.

The enzyme catalyses S-adenosyl-L-homocysteine + H2O = S-(5-deoxy-D-ribos-5-yl)-L-homocysteine + adenine. It carries out the reaction S-methyl-5'-thioadenosine + H2O = 5-(methylsulfanyl)-D-ribose + adenine. The catalysed reaction is 5'-deoxyadenosine + H2O = 5-deoxy-D-ribose + adenine. The protein operates within amino-acid biosynthesis; L-methionine biosynthesis via salvage pathway; S-methyl-5-thio-alpha-D-ribose 1-phosphate from S-methyl-5'-thioadenosine (hydrolase route): step 1/2. Functionally, catalyzes the irreversible cleavage of the glycosidic bond in both 5'-methylthioadenosine (MTA) and S-adenosylhomocysteine (SAH/AdoHcy) to adenine and the corresponding thioribose, 5'-methylthioribose and S-ribosylhomocysteine, respectively. Also cleaves 5'-deoxyadenosine, a toxic by-product of radical S-adenosylmethionine (SAM) enzymes, into 5-deoxyribose and adenine. The polypeptide is 5'-methylthioadenosine/S-adenosylhomocysteine nucleosidase (Shewanella baltica (strain OS223)).